The chain runs to 162 residues: HTH-type transcriptional regulator IscR (162 aa).

An HTH rrf2-type domain is found at 2 to 131 (RLTSKGRYAV…NNITLGELVN (130 aa)). Residues 28 to 51 (LADISERQGISLSYLEQLFSRLRK) constitute a DNA-binding region (H-T-H motif). 3 residues coordinate [2Fe-2S] cluster: cysteine 92, cysteine 98, and cysteine 104. The tract at residues 140–162 (GRQHTHDAPRTRTQDAIDVKLRA) is disordered. The segment covering 143-162 (HTHDAPRTRTQDAIDVKLRA) has biased composition (basic and acidic residues).

Requires [2Fe-2S] cluster as cofactor.

In terms of biological role, regulates the transcription of several operons and genes involved in the biogenesis of Fe-S clusters and Fe-S-containing proteins. This Shigella flexneri protein is HTH-type transcriptional regulator IscR.